The sequence spans 23 residues: Maculatin-1.2 (23 aa).

Residue Ala-23 is modified to Alanine amide.

Expressed by the skin dorsal glands.

The protein localises to the secreted. Shows antibacterial activity against S.aureus and S.uberis. This chain is Maculatin-1.2, found in Ranoidea genimaculata (Brown-spotted tree frog).